The following is an 868-amino-acid chain: Homeobox-leucine zipper protein HOX29 (868 aa).

Residues 9 to 72 (DASKYVRYTP…NRRCREKQRK (64 aa)) constitute a DNA-binding region (homeobox). A coiled-coil region spans residues 64 to 106 (RRCREKQRKESSRLQALNRKLTAMNKLLMEENDRLQKQVSQLV). The interval 150-171 (VTSGHHHQQQQHNVVQPPPRDA) is disordered. The 229-residue stretch at 169-397 (RDASPAGLMS…VAHEDTRSVI (229 aa)) folds into the START domain.

It belongs to the HD-ZIP homeobox family. Class III subfamily. In terms of tissue distribution, expressed in phloem.

The protein localises to the nucleus. In terms of biological role, probable transcription factor that may be necessary for the proper patterning of vascular bundles. The protein is Homeobox-leucine zipper protein HOX29 (HOX29) of Oryza sativa subsp. japonica (Rice).